Consider the following 121-residue polypeptide: Large ribosomal subunit protein bL12 (121 aa).

This sequence belongs to the bacterial ribosomal protein bL12 family. In terms of assembly, homodimer. Part of the ribosomal stalk of the 50S ribosomal subunit. Forms a multimeric L10(L12)X complex, where L10 forms an elongated spine to which 2 to 4 L12 dimers bind in a sequential fashion. Binds GTP-bound translation factors.

Functionally, forms part of the ribosomal stalk which helps the ribosome interact with GTP-bound translation factors. Is thus essential for accurate translation. In Vibrio atlanticus (strain LGP32) (Vibrio splendidus (strain Mel32)), this protein is Large ribosomal subunit protein bL12.